A 396-amino-acid polypeptide reads, in one-letter code: NADH-quinone oxidoreductase subunit D (396 aa).

It belongs to the complex I 49 kDa subunit family. As to quaternary structure, NDH-1 is composed of 14 different subunits. Subunits NuoB, C, D, E, F, and G constitute the peripheral sector of the complex.

The protein localises to the cell inner membrane. The enzyme catalyses a quinone + NADH + 5 H(+)(in) = a quinol + NAD(+) + 4 H(+)(out). Its function is as follows. NDH-1 shuttles electrons from NADH, via FMN and iron-sulfur (Fe-S) centers, to quinones in the respiratory chain. The immediate electron acceptor for the enzyme in this species is believed to be ubiquinone. Couples the redox reaction to proton translocation (for every two electrons transferred, four hydrogen ions are translocated across the cytoplasmic membrane), and thus conserves the redox energy in a proton gradient. This chain is NADH-quinone oxidoreductase subunit D, found in Mesorhizobium japonicum (strain LMG 29417 / CECT 9101 / MAFF 303099) (Mesorhizobium loti (strain MAFF 303099)).